A 412-amino-acid chain; its full sequence is Alanyl-tRNA editing protein Aarsd1-B (412 aa).

Zn(2+)-binding residues include histidine 108, histidine 112, cysteine 208, and histidine 212.

It belongs to the class-II aminoacyl-tRNA synthetase family. Alax-L subfamily. The cofactor is Zn(2+).

The protein localises to the cytoplasm. Functionally, functions in trans to edit the amino acid moiety from incorrectly charged tRNA(Ala). This Xenopus laevis (African clawed frog) protein is Alanyl-tRNA editing protein Aarsd1-B (aarsd1-b).